The primary structure comprises 140 residues: Large ribosomal subunit protein uL11 (140 aa).

It belongs to the universal ribosomal protein uL11 family. Part of the ribosomal stalk of the 50S ribosomal subunit. Interacts with L10 and the large rRNA to form the base of the stalk. L10 forms an elongated spine to which L12 dimers bind in a sequential fashion forming a multimeric L10(L12)X complex. Post-translationally, one or more lysine residues are methylated.

In terms of biological role, forms part of the ribosomal stalk which helps the ribosome interact with GTP-bound translation factors. The protein is Large ribosomal subunit protein uL11 of Nitratidesulfovibrio vulgaris (strain DSM 19637 / Miyazaki F) (Desulfovibrio vulgaris).